The following is a 246-amino-acid chain: MEEAASQSLEEDFEGQATHTGPKGVINDWRKFKLESEDGDSIPPSKKEILRQMSSPQSRDDKDSKERMSRKMSIQEYELIHQDKEDEGCLRKYRRQCMQDMHQKLSFGPRYGFVYELETGEQFLETIEKEQKVTTIVVNIYEDGVRGCDALNSSLECLAAEYPMVKFCKIRASNTGAGDRFSSDVLPTLLVYKGGELISNFISVAEQFAEDFFAADVESFLNEYGLLPEREIHDLGQTNTEDEDIE.

Acidic residues predominate over residues 1 to 14; that stretch reads MEEAASQSLEEDFE. The segment at 1-70 is disordered; that stretch reads MEEAASQSLE…DKDSKERMSR (70 aa). Positions 1 to 246 constitute a Phosducin domain; sequence MEEAASQSLE…QTNTEDEDIE (246 aa). Residues 58-69 show a composition bias toward basic and acidic residues; that stretch reads SRDDKDSKERMS. Ser73 carries the phosphoserine; by PKA modification. The segment at 111-246 is thioredoxin fold; that stretch reads YGFVYELETG…QTNTEDEDIE (136 aa).

The protein belongs to the phosducin family. As to quaternary structure, interacts with CRX. Forms a complex with the beta and gamma subunits of the GTP-binding protein, transducin. In terms of processing, light-induced changes in cyclic nucleotide levels modulate the phosphorylation of this protein by cAMP kinase.

It localises to the cytoplasm. It is found in the cytosol. Its subcellular location is the nucleus. The protein localises to the cell projection. The protein resides in the cilium. It localises to the photoreceptor outer segment. It is found in the photoreceptor inner segment. Its function is as follows. Inhibits the transcriptional activation activity of the cone-rod homeobox CRX. May participate in the regulation of visual phototransduction or in the integration of photoreceptor metabolism. This Rattus norvegicus (Rat) protein is Phosducin (Pdc).